Consider the following 333-residue polypeptide: Holliday junction branch migration complex subunit RuvB (333 aa).

Residues 1–182 (MDERLLSGES…FGVLSRLEYY (182 aa)) form a large ATPase domain (RuvB-L) region. ATP contacts are provided by residues Leu21, Arg22, Gly63, Lys66, Thr67, Thr68, 129 to 131 (EDF), Arg172, Tyr182, and Arg219. Mg(2+) is bound at residue Thr67. The tract at residues 183–253 (TVDQLSAIVE…ITQMALELLQ (71 aa)) is small ATPAse domain (RuvB-S). Residues 256-333 (KLGLDHIDHK…EHFGMEMPKV (78 aa)) form a head domain (RuvB-H) region. The DNA site is built by Arg311 and Arg316.

The protein belongs to the RuvB family. In terms of assembly, homohexamer. Forms an RuvA(8)-RuvB(12)-Holliday junction (HJ) complex. HJ DNA is sandwiched between 2 RuvA tetramers; dsDNA enters through RuvA and exits via RuvB. An RuvB hexamer assembles on each DNA strand where it exits the tetramer. Each RuvB hexamer is contacted by two RuvA subunits (via domain III) on 2 adjacent RuvB subunits; this complex drives branch migration. In the full resolvosome a probable DNA-RuvA(4)-RuvB(12)-RuvC(2) complex forms which resolves the HJ.

It localises to the cytoplasm. It catalyses the reaction ATP + H2O = ADP + phosphate + H(+). In terms of biological role, the RuvA-RuvB-RuvC complex processes Holliday junction (HJ) DNA during genetic recombination and DNA repair, while the RuvA-RuvB complex plays an important role in the rescue of blocked DNA replication forks via replication fork reversal (RFR). RuvA specifically binds to HJ cruciform DNA, conferring on it an open structure. The RuvB hexamer acts as an ATP-dependent pump, pulling dsDNA into and through the RuvAB complex. RuvB forms 2 homohexamers on either side of HJ DNA bound by 1 or 2 RuvA tetramers; 4 subunits per hexamer contact DNA at a time. Coordinated motions by a converter formed by DNA-disengaged RuvB subunits stimulates ATP hydrolysis and nucleotide exchange. Immobilization of the converter enables RuvB to convert the ATP-contained energy into a lever motion, pulling 2 nucleotides of DNA out of the RuvA tetramer per ATP hydrolyzed, thus driving DNA branch migration. The RuvB motors rotate together with the DNA substrate, which together with the progressing nucleotide cycle form the mechanistic basis for DNA recombination by continuous HJ branch migration. Branch migration allows RuvC to scan DNA until it finds its consensus sequence, where it cleaves and resolves cruciform DNA. This chain is Holliday junction branch migration complex subunit RuvB, found in Bacillus mycoides (strain KBAB4) (Bacillus weihenstephanensis).